The sequence spans 170 residues: Acetyl-CoA decarbonylase/synthase complex subunit epsilon 2 (170 aa).

This sequence belongs to the CdhB family. As to quaternary structure, heterotetramer of two alpha and two epsilon subunits. The ACDS complex is made up of alpha, epsilon, beta, gamma and delta subunits with a probable stoichiometry of (alpha(2)epsilon(2))(4)-beta(8)-(gamma(1)delta(1))(8).

Its pathway is one-carbon metabolism; methanogenesis from acetate. In terms of biological role, part of a complex that catalyzes the reversible cleavage of acetyl-CoA, allowing growth on acetate as sole source of carbon and energy. The alpha-epsilon subcomponent functions as a carbon monoxide dehydrogenase. The precise role of the epsilon subunit is unclear; it may have a stabilizing role within the alpha(2)epsilon(2) component and/or be involved in electron transfer to FAD during a potential FAD-mediated CO oxidation. This Methanosarcina thermophila protein is Acetyl-CoA decarbonylase/synthase complex subunit epsilon 2 (cdhB2).